A 283-amino-acid chain; its full sequence is Glutamate racemase (283 aa).

Substrate contacts are provided by residues 28–29 and 60–61; these read DS and YG. C92 functions as the Proton donor/acceptor in the catalytic mechanism. Residue 93 to 94 coordinates substrate; that stretch reads NT. C204 functions as the Proton donor/acceptor in the catalytic mechanism. Residue 205-206 coordinates substrate; sequence TH.

Belongs to the aspartate/glutamate racemases family.

It catalyses the reaction L-glutamate = D-glutamate. It functions in the pathway cell wall biogenesis; peptidoglycan biosynthesis. Its function is as follows. Provides the (R)-glutamate required for cell wall biosynthesis. In Salmonella enteritidis PT4 (strain P125109), this protein is Glutamate racemase.